Consider the following 536-residue polypeptide: Organic anion transporter 3 (536 aa).

At 1-11 (MTFSEILDRVG) the chain is on the cytoplasmic side. Ser4 carries the post-translational modification Phosphoserine. Residues 12–32 (SMGPFQYLHVTLLALPVLGIA) traverse the membrane as a helical segment. The Extracellular portion of the chain corresponds to 33-123 (NHNLLQIFTA…LVCSSNKLKE (91 aa)). Residues Asn81 and Asn86 are each glycosylated (N-linked (GlcNAc...) asparagine). The chain crosses the membrane as a helical span at residues 124 to 144 (MAQSIFMAGILVGGPVIGELS). The Cytoplasmic portion of the chain corresponds to 145–158 (DRFGRKPILTWSYL). The helical transmembrane segment at 159–179 (MLAASGSGAAFSPSLPVYMIF) threads the bilayer. A topological domain (extracellular) is located at residue Arg180. The helical transmembrane segment at 181-201 (FLCGCSISGISLSTVILNVEW) threads the bilayer. Residues 202 to 212 (VPTSMRAISST) are Cytoplasmic-facing. A helical transmembrane segment spans residues 213-233 (SIGYCYTIGQFILSGLAYAIP). Residues 234–236 (QWR) lie on the Extracellular side of the membrane. A helical transmembrane segment spans residues 237 to 257 (WLQLTSSAPFFIFSLLSWWVP). The Cytoplasmic portion of the chain corresponds to 258 to 327 (ESIRWLVLSG…FRVSILRRVT (70 aa)). Residues 328-348 (FCLSLAWFSTGFAYYSLAMGV) traverse the membrane as a helical segment. Topologically, residues 349–354 (EEFGVN) are extracellular. A helical membrane pass occupies residues 355–375 (IYILQIIFGGVDIPAKFITIL). Residues 376 to 383 (SLSYLGRR) lie on the Cytoplasmic side of the membrane. The chain crosses the membrane as a helical span at residues 384-404 (ITQSFLLLLAGGAILALIFVP). Over 405–411 (SEMQLLR) the chain is Extracellular. A helical membrane pass occupies residues 412–432 (TALAVFGKGCLSGSFSCLFLY). Residues 433 to 471 (TSELYPTVLRQTGMGISNVWARVGSMIAPLVKITGELQP) lie on the Cytoplasmic side of the membrane. Residues 472 to 492 (FIPNVIFGTTALLGGSAAFFL) traverse the membrane as a helical segment. Over 493–536 (LETLNRPLPETIEDIQNWHKQVQKTKQESEAEKASQIIPLKTGG) the chain is Extracellular. The tract at residues 515–536 (QKTKQESEAEKASQIIPLKTGG) is disordered.

It belongs to the major facilitator (TC 2.A.1) superfamily. Organic cation transporter (TC 2.A.1.19) family. In terms of tissue distribution, expressed in the liver, brain, kidney, choroid plexus and weakly in the eye. Moderately expressed (at protein level) in the brain capillary endothelial cells (BCEC).

Its subcellular location is the basolateral cell membrane. It carries out the reaction estrone 3-sulfate(out) + glutarate(in) = estrone 3-sulfate(in) + glutarate(out). The catalysed reaction is estrone 3-sulfate(in) + 2-oxoglutarate(out) = estrone 3-sulfate(out) + 2-oxoglutarate(in). It catalyses the reaction glutarate(in) + 2-oxoglutarate(out) = glutarate(out) + 2-oxoglutarate(in). The enzyme catalyses urate(in) + 2-oxoglutarate(out) = urate(out) + 2-oxoglutarate(in). It carries out the reaction taurocholate(out) + glutarate(in) = taurocholate(in) + glutarate(out). The catalysed reaction is dehydroepiandrosterone 3-sulfate(out) + glutarate(in) = dehydroepiandrosterone 3-sulfate(in) + glutarate(out). It catalyses the reaction prostaglandin F2alpha(out) + glutarate(in) = prostaglandin F2alpha(in) + glutarate(out). The enzyme catalyses prostaglandin F2alpha(out) + 2-oxoglutarate(in) = prostaglandin F2alpha(in) + 2-oxoglutarate(out). It carries out the reaction (R)-carnitine(out) + 2-oxoglutarate(in) = (R)-carnitine(in) + 2-oxoglutarate(out). The catalysed reaction is glutarate(in) + (R)-carnitine(out) = glutarate(out) + (R)-carnitine(in). It catalyses the reaction prostaglandin E2(out) + 2-oxoglutarate(in) = prostaglandin E2(in) + 2-oxoglutarate(out). The enzyme catalyses prostaglandin E2(out) + glutarate(in) = prostaglandin E2(in) + glutarate(out). It carries out the reaction urate(in) + glutarate(out) = urate(out) + glutarate(in). The catalysed reaction is taurocholate(out) + 2-oxoglutarate(in) = taurocholate(in) + 2-oxoglutarate(out). It catalyses the reaction dehydroepiandrosterone 3-sulfate(out) + 2-oxoglutarate(in) = dehydroepiandrosterone 3-sulfate(in) + 2-oxoglutarate(out). The enzyme catalyses kynurenate(out) + a dicarboxylate(in) = kynurenate(in) + a dicarboxylate(out). It carries out the reaction (indol-3-yl)acetate(out) + a dicarboxylate(in) = (indol-3-yl)acetate(in) + a dicarboxylate(out). The catalysed reaction is indoxyl sulfate(out) + a dicarboxylate(in) = indoxyl sulfate(in) + a dicarboxylate(out). It catalyses the reaction N-benzoylglycine(out) + a dicarboxylate(in) = N-benzoylglycine(in) + a dicarboxylate(out). The enzyme catalyses 3-carboxy-4-methyl-5-propyl-2-furanpropanoate(out) + a dicarboxylate(in) = 3-carboxy-4-methyl-5-propyl-2-furanpropanoate(in) + a dicarboxylate(out). It carries out the reaction (6R)-L-erythro-5,6,7,8-tetrahydrobiopterin(out) + a dicarboxylate(in) = (6R)-L-erythro-5,6,7,8-tetrahydrobiopterin(in) + a dicarboxylate(out). The catalysed reaction is L-erythro-7,8-dihydrobiopterin(out) + a dicarboxylate(in) = L-erythro-7,8-dihydrobiopterin(in) + a dicarboxylate(out). It catalyses the reaction L-sepiapterin(out) + a dicarboxylate(in) = L-sepiapterin(in) + a dicarboxylate(out). In terms of biological role, functions as an organic anion/dicarboxylate exchanger that couples organic anion uptake indirectly to the sodium gradient. Transports organic anions such as estrone 3-sulfate (E1S) and urate in exchange for dicarboxylates such as glutarate or ketoglutarate (2-oxoglutarate). Plays an important role in the excretion of endogenous and exogenous organic anions, especially from the kidney and the brain. E1S transport is pH- and chloride-dependent and may also involve E1S/cGMP exchange. Responsible for the transport of prostaglandin E2 (PGE2) and prostaglandin F2(alpha) (PGF2(alpha)) in the basolateral side of the renal tubule. Involved in the transport of neuroactive tryptophan metabolites kynurenate and xanthurenate. Functions as a biopterin transporters involved in the uptake and the secretion of coenzymes tetrahydrobiopterin (BH4), dihydrobiopterin (BH2) and sepiapterin to urine, thereby determining baseline levels of blood biopterins. May be involved in the basolateral transport of steviol, a metabolite of the popular sugar substitute stevioside. May participate in the detoxification/ renal excretion of drugs and xenobiotics, such as the histamine H(2)-receptor antagonists fexofenadine and cimetidine, the antibiotic benzylpenicillin (PCG), the anionic herbicide 2,4-dichloro-phenoxyacetate (2,4-D), the diagnostic agent p-aminohippurate (PAH), the antiviral acyclovir (ACV), and the mycotoxin ochratoxin (OTA), by transporting these exogenous organic anions across the cell membrane in exchange for dicarboxylates such as 2-oxoglutarate. Contributes to the renal uptake of potent uremic toxins (indoxyl sulfate (IS), indole acetate (IA), hippurate/N-benzoylglycine (HA) and 3-carboxy-4-methyl-5-propyl-2-furanpropionate (CMPF)), pravastatin, PCG, E1S and dehydroepiandrosterone sulfate (DHEAS), and is partly involved in the renal uptake of temocaprilat (an angiotensin-converting enzyme (ACE) inhibitor). May contribute to the release of cortisol in the adrenals. Involved in one of the detoxification systems on the choroid plexus (CP), removes substrates such as E1S or taurocholate (TC), PCG, 2,4-D and PAH, from the cerebrospinal fluid (CSF) to the blood for eventual excretion in urine and bile. Regulates the CSF concentration of histamine H(2)-receptor antagonists cimetidine and ranitidine at the CP. Also contributes to the uptake of several other organic compounds such as the prostanoids prostaglandin E(2) and prostaglandin F(2-alpha), L-carnitine, and the therapeutic drugs allopurinol, 6-mercaptopurine (6-MP) and 5-fluorouracil (5-FU). Mediates the uptake from brain of organic anions, such as E1S, PAH, and OTA. Mediates the transport of PAH, PCG, and the statins pravastatin and pitavastatin, from the cerebrum into the blood circulation across the blood-brain barrier (BBB). In summary, plays a role in the efflux of drugs and xenobiotics, helping reduce their undesired toxicological effects on the body. This is Organic anion transporter 3 (Slc22a8) from Rattus norvegicus (Rat).